The following is a 384-amino-acid chain: Probable UDP-galactopyranose mutase (384 aa).

Positions 1–19 (MNNKNIMIVGAGFSGVVIA) are cleaved as a signal peptide. FAD contacts are provided by residues serine 14, 33–34 (DR), asparagine 41, and 60–61 (HI). The UDP-alpha-D-galactose site is built by asparagine 84, phenylalanine 151, threonine 156, tryptophan 160, and tyrosine 185. An FAD-binding site is contributed by phenylalanine 219. Positions 270, 280, and 314 each coordinate UDP-alpha-D-galactose. Residue arginine 343 coordinates FAD. A UDP-alpha-D-galactose-binding site is contributed by tyrosine 349. 350-355 (LDMDVT) contacts FAD.

It belongs to the UDP-galactopyranose/dTDP-fucopyranose mutase family. In terms of assembly, homodimer. It depends on FAD as a cofactor.

It catalyses the reaction UDP-alpha-D-galactose = UDP-alpha-D-galactofuranose. It functions in the pathway bacterial outer membrane biogenesis; LPS O-antigen biosynthesis. Catalyzes the interconversion through a 2-keto intermediate of uridine diphosphogalactopyranose (UDP-GalP) into uridine diphosphogalactofuranose (UDP-GalF). The polypeptide is Probable UDP-galactopyranose mutase (rfbD) (Klebsiella pneumoniae).